The following is a 140-amino-acid chain: Putative ABC transporter permease protein ORF1 (140 aa).

Residues 1–133 (DPNVAFYSVV…ITTAGIFAYF (133 aa)) form the ABC transmembrane type-1 domain. The next 3 membrane-spanning stretches (helical) occupy residues 9–29 (VVAV…IAAL), 65–85 (TACI…YVMT), and 115–135 (TIAS…YFVT).

Belongs to the binding-protein-dependent transport system permease family. MalFG subfamily.

The protein resides in the cell membrane. Functionally, may play a role in sugar transport. The polypeptide is Putative ABC transporter permease protein ORF1 (Caldicellulosiruptor sp. (strain Rt8B.4)).